The chain runs to 110 residues: Auxin-responsive protein SAUR71 (110 aa).

The protein belongs to the ARG7 family. Highly expressed in the steles of roots and hypocotyls.

The protein localises to the cytoplasm. Its function is as follows. Plays a role in the regulation of cell expansion, root meristem patterning and auxin transport. The chain is Auxin-responsive protein SAUR71 from Arabidopsis thaliana (Mouse-ear cress).